Here is a 745-residue protein sequence, read N- to C-terminus: Immunoglobulin superfamily containing leucine-rich repeat protein 2 (745 aa).

An N-terminal signal peptide occupies residues 1–18; the sequence is MFPLRALWLVWALLGVAG. In terms of domain architecture, LRRNT spans 19 to 51; sequence SCPEPCACVDKYAHQFADCAYKELREVPEGLPA. The Extracellular segment spans residues 19 to 589; that stretch reads SCPEPCACVD…VFSTKKELPS (571 aa). The N-linked (GlcNAc...) asparagine glycan is linked to asparagine 52. 5 LRR repeats span residues 52 to 73, 76 to 97, 100 to 123, 124 to 145, and 148 to 169; these read NVTTLSLSANKITVLRRGAFAD, QVTSLWLAHNEVRTVEPGALAV, QLKNLDLSHNFISSFPWSDLRNLS, ALQLLKMNHNRLGSLPRDALGA, and DLRSLRINNNRLRTLAPGTFDA. The N-linked (GlcNAc...) asparagine glycan is linked to asparagine 121. Positions 181-232 constitute an LRRCT domain; it reads NPFHCGCGLVWLQAWAASTRVSLPEPDSIACASPPALQGVPVYRLPALPCAP. An Ig-like domain is found at 233-371; it reads PSVHLSAEPP…GANSTSIRVA (139 aa). The cysteines at positions 260 and 355 are disulfide-linked. Residues 287 to 326 form a disordered region; it reads VLSGEDDGVGAEEGEGEGDGDLLTQTQAQTPTPAPAWPAP. Residues 290–306 show a composition bias toward acidic residues; that stretch reads GEDDGVGAEEGEGEGDG. Residues asparagine 337 and asparagine 364 are each glycosylated (N-linked (GlcNAc...) asparagine). The interval 375 to 466 is disordered; it reads TGPPKHAPGA…QRCGNGDPSR (92 aa). The segment covering 431-449 has biased composition (acidic residues); that stretch reads TETEPEEDTSEGEEAEDQI. 2 N-linked (GlcNAc...) asparagine glycosylation sites follow: asparagine 474 and asparagine 563. A helical transmembrane segment spans residues 590-610; the sequence is LLVIVAVSVFLLVLATVPLLG. At 611-745 the chain is on the cytoplasmic side; sequence AACCHLLAKH…INGNYRQTAG (135 aa). Residues 656–722 are disordered; sequence KSYPAGGEAG…FEAGSEYSDR (67 aa). Residues 665-683 are compositionally biased toward acidic residues; sequence GGEEPEDVQGEGLDEDAEQ. Phosphotyrosine is present on tyrosine 719. Serine 720 carries the post-translational modification Phosphoserine.

As to quaternary structure, homomultimer. Interacts with NTRK1/TrkA.

The protein resides in the cell membrane. Required for axon extension during neural development. The sequence is that of Immunoglobulin superfamily containing leucine-rich repeat protein 2 (ISLR2) from Homo sapiens (Human).